Consider the following 108-residue polypeptide: Nucleoid-associated protein PSHAa1202 (108 aa).

Disordered regions lie at residues 1–20 (MFKG…QDRM) and 87–108 (TQER…KMPF).

This sequence belongs to the YbaB/EbfC family. Homodimer.

The protein resides in the cytoplasm. The protein localises to the nucleoid. Its function is as follows. Binds to DNA and alters its conformation. May be involved in regulation of gene expression, nucleoid organization and DNA protection. The sequence is that of Nucleoid-associated protein PSHAa1202 from Pseudoalteromonas translucida (strain TAC 125).